We begin with the raw amino-acid sequence, 400 residues long: Elongation factor Tu-B (400 aa).

The tr-type G domain occupies 10–209 (KPHVNVGTIG…VVDEYIPTPE (200 aa)). The tract at residues 19-26 (GHVDHGKT) is G1. 19 to 26 (GHVDHGKT) contacts GTP. Thr-26 is a binding site for Mg(2+). Positions 60–64 (GITIN) are G2. The segment at 81–84 (DCPG) is G3. Residues 81–85 (DCPGH) and 136–139 (NKAD) contribute to the GTP site. The segment at 136–139 (NKAD) is G4. Residues 174–176 (SAL) are G5.

It belongs to the TRAFAC class translation factor GTPase superfamily. Classic translation factor GTPase family. EF-Tu/EF-1A subfamily. Monomer.

The protein resides in the cytoplasm. The enzyme catalyses GTP + H2O = GDP + phosphate + H(+). Its function is as follows. GTP hydrolase that promotes the GTP-dependent binding of aminoacyl-tRNA to the A-site of ribosomes during protein biosynthesis. The chain is Elongation factor Tu-B from Caldanaerobacter subterraneus subsp. tengcongensis (strain DSM 15242 / JCM 11007 / NBRC 100824 / MB4) (Thermoanaerobacter tengcongensis).